The primary structure comprises 660 residues: Probable alpha-galactosidase D (660 aa).

Residues 1–20 (MLLHFILYAALSSVVTSVSL) form the signal peptide. 3 N-linked (GlcNAc...) asparagine glycosylation sites follow: Asn47, Asn91, and Asn129. An intrachain disulfide couples Cys124 to Cys157. The active-site Nucleophile is Asp155. 2 N-linked (GlcNAc...) asparagine glycosylation sites follow: Asn182 and Asn191. 200–204 (EWGIS) is a binding site for substrate. Asp222 serves as the catalytic Proton donor. Residues Asn351, Asn403, Asn460, Asn492, Asn506, Asn514, and Asn584 are each glycosylated (N-linked (GlcNAc...) asparagine).

It belongs to the glycosyl hydrolase 27 family.

It localises to the secreted. The enzyme catalyses Hydrolysis of terminal, non-reducing alpha-D-galactose residues in alpha-D-galactosides, including galactose oligosaccharides, galactomannans and galactolipids.. In terms of biological role, hydrolyzes a variety of simple alpha-D-galactoside as well as more complex molecules such as oligosaccharides and polysaccharides. The protein is Probable alpha-galactosidase D (aglD) of Aspergillus niger (strain ATCC MYA-4892 / CBS 513.88 / FGSC A1513).